The chain runs to 432 residues: Enolase (432 aa).

Gln167 is a (2R)-2-phosphoglycerate binding site. The active-site Proton donor is the Glu209. Mg(2+) is bound by residues Asp246, Glu287, and Asp314. 4 residues coordinate (2R)-2-phosphoglycerate: Lys339, Arg368, Ser369, and Lys390. The Proton acceptor role is filled by Lys339.

It belongs to the enolase family. Requires Mg(2+) as cofactor.

It is found in the cytoplasm. Its subcellular location is the secreted. It localises to the cell surface. The catalysed reaction is (2R)-2-phosphoglycerate = phosphoenolpyruvate + H2O. The protein operates within carbohydrate degradation; glycolysis; pyruvate from D-glyceraldehyde 3-phosphate: step 4/5. Its function is as follows. Catalyzes the reversible conversion of 2-phosphoglycerate (2-PG) into phosphoenolpyruvate (PEP). It is essential for the degradation of carbohydrates via glycolysis. The polypeptide is Enolase (Prochlorococcus marinus (strain MIT 9211)).